The primary structure comprises 206 residues: Large ribosomal subunit protein uL3 (206 aa).

It belongs to the universal ribosomal protein uL3 family. In terms of assembly, part of the 50S ribosomal subunit. Forms a cluster with proteins L14 and L19.

Functionally, one of the primary rRNA binding proteins, it binds directly near the 3'-end of the 23S rRNA, where it nucleates assembly of the 50S subunit. The protein is Large ribosomal subunit protein uL3 of Cytophaga hutchinsonii (strain ATCC 33406 / DSM 1761 / CIP 103989 / NBRC 15051 / NCIMB 9469 / D465).